A 418-amino-acid polypeptide reads, in one-letter code: Dwarfin sma-2 (418 aa).

The MH1 domain occupies 8–134 (KKITERLKWK…YKRVHATGVL (127 aa)). Residues cysteine 62, cysteine 107, cysteine 119, and histidine 124 each coordinate Zn(2+). An MH2 domain is found at 222–418 (WATVSYYELN…PTPRPISSIS (197 aa)).

This sequence belongs to the dwarfin/SMAD family.

Its subcellular location is the cytoplasm. It localises to the nucleus. Its function is as follows. Involved in TGF-beta pathway. Plays a role in male tail tip morphogenesis. This is Dwarfin sma-2 from Caenorhabditis elegans.